A 211-amino-acid chain; its full sequence is Ribosomal RNA small subunit methyltransferase G (211 aa).

Residues Gly81, Leu86, 132 to 133 (AE), and Arg147 each bind S-adenosyl-L-methionine.

It belongs to the methyltransferase superfamily. RNA methyltransferase RsmG family.

The protein resides in the cytoplasm. The catalysed reaction is guanosine(527) in 16S rRNA + S-adenosyl-L-methionine = N(7)-methylguanosine(527) in 16S rRNA + S-adenosyl-L-homocysteine. Specifically methylates the N7 position of guanine in position 527 of 16S rRNA. The chain is Ribosomal RNA small subunit methyltransferase G from Dichelobacter nodosus (strain VCS1703A).